The following is a 210-amino-acid chain: MSDAKELKQVLTGPIVNNNPIALQVLGVCSALAVTSKLETALVMALALTAVTAFSNLFISMIRNHIPSSVRIIVQMTIIASLVIVVDQLLQAYAYQISKQLSVFVGLIITNCIVMGRAEAYAMKTPPMMSFMDGIGNGLGYGAILLAVGFVRELFGNGSLFGVQILHKISEGGWYQPNGLLLLPPSAFFLIGILIWIIRTYKPEQVEAKG.

6 consecutive transmembrane segments (helical) span residues 14-34 (PIVN…ALAV), 42-62 (LVMA…ISMI), 72-92 (IIVQ…LLQA), 103-123 (VFVG…AYAM), 131-151 (FMDG…VGFV), and 178-198 (NGLL…IWII).

This sequence belongs to the NqrDE/RnfAE family. Composed of six subunits; NqrA, NqrB, NqrC, NqrD, NqrE and NqrF.

Its subcellular location is the cell inner membrane. The catalysed reaction is a ubiquinone + n Na(+)(in) + NADH + H(+) = a ubiquinol + n Na(+)(out) + NAD(+). In terms of biological role, NQR complex catalyzes the reduction of ubiquinone-1 to ubiquinol by two successive reactions, coupled with the transport of Na(+) ions from the cytoplasm to the periplasm. NqrA to NqrE are probably involved in the second step, the conversion of ubisemiquinone to ubiquinol. The protein is Na(+)-translocating NADH-quinone reductase subunit D of Shewanella sp. (strain ANA-3).